The sequence spans 1232 residues: DNA-directed RNA polymerase subunit beta (1232 aa).

The segment at 1170 to 1232 (SVDEDADELE…LDLDDFGDEH (63 aa)) is disordered. A compositionally biased stretch (acidic residues) spans 1171–1180 (VDEDADELEV). Over residues 1189-1198 (PEEKEEKEKE) the composition is skewed to basic and acidic residues. Over residues 1199–1232 (DSDEYDDLREEDVEPDLEELSLDDLDLDDFGDEH) the composition is skewed to acidic residues.

Belongs to the RNA polymerase beta chain family. As to quaternary structure, the RNAP catalytic core consists of 2 alpha, 1 beta, 1 beta' and 1 omega subunit. When a sigma factor is associated with the core the holoenzyme is formed, which can initiate transcription.

It carries out the reaction RNA(n) + a ribonucleoside 5'-triphosphate = RNA(n+1) + diphosphate. Functionally, DNA-dependent RNA polymerase catalyzes the transcription of DNA into RNA using the four ribonucleoside triphosphates as substrates. The sequence is that of DNA-directed RNA polymerase subunit beta from Clostridium botulinum (strain Okra / Type B1).